An 83-amino-acid polypeptide reads, in one-letter code: ATP synthase subunit c, chloroplastic (83 aa).

2 helical membrane passes run 4–24 (IISA…AIGP) and 57–77 (LAFM…LLFA).

The protein belongs to the ATPase C chain family. In terms of assembly, F-type ATPases have 2 components, F(1) - the catalytic core - and F(0) - the membrane proton channel. F(1) has five subunits: alpha(3), beta(3), gamma(1), delta(1), epsilon(1). F(0) has four main subunits: a(1), b(1), b'(1) and c(10-14). The alpha and beta chains form an alternating ring which encloses part of the gamma chain. F(1) is attached to F(0) by a central stalk formed by the gamma and epsilon chains, while a peripheral stalk is formed by the delta, b and b' chains.

It localises to the plastid. The protein localises to the chloroplast thylakoid membrane. F(1)F(0) ATP synthase produces ATP from ADP in the presence of a proton or sodium gradient. F-type ATPases consist of two structural domains, F(1) containing the extramembraneous catalytic core and F(0) containing the membrane proton channel, linked together by a central stalk and a peripheral stalk. During catalysis, ATP synthesis in the catalytic domain of F(1) is coupled via a rotary mechanism of the central stalk subunits to proton translocation. Functionally, key component of the F(0) channel; it plays a direct role in translocation across the membrane. A homomeric c-ring of between 10-14 subunits forms the central stalk rotor element with the F(1) delta and epsilon subunits. The chain is ATP synthase subunit c, chloroplastic from Galdieria sulphuraria (Red alga).